Here is a 421-residue protein sequence, read N- to C-terminus: ATP-dependent RNA helicase RhlB (421 aa).

Residues 9–37 (QKFSDFALHPAVIEALEKKGFHNCTPIQA) carry the Q motif motif. Residues 40 to 219 (LPLTLEGRDV…FEQMNNAEYV (180 aa)) enclose the Helicase ATP-binding domain. 53 to 60 (AQTGTGKT) contacts ATP. The DEAD box signature appears at 165–168 (DEAD). Residues 245 to 390 (RLLQTLLEEE…VSKYNPDALM (146 aa)) form the Helicase C-terminal domain. A disordered region spans residues 396–421 (PLRLTRARPGNGPRRNGPPRNRRRSG). Over residues 403–414 (RPGNGPRRNGPP) the composition is skewed to low complexity.

This sequence belongs to the DEAD box helicase family. RhlB subfamily. As to quaternary structure, component of the RNA degradosome, which is a multiprotein complex involved in RNA processing and mRNA degradation.

Its subcellular location is the cytoplasm. The enzyme catalyses ATP + H2O = ADP + phosphate + H(+). Functionally, DEAD-box RNA helicase involved in RNA degradation. Has RNA-dependent ATPase activity and unwinds double-stranded RNA. This Klebsiella pneumoniae subsp. pneumoniae (strain ATCC 700721 / MGH 78578) protein is ATP-dependent RNA helicase RhlB.